Reading from the N-terminus, the 150-residue chain is uncharacterized protein (150 aa).

The N-acetyltransferase domain maps to 4 to 149 (IQIRNYQPGD…TNFYMRYKPQ (146 aa)).

This sequence belongs to the acetyltransferase family.

This is an uncharacterized protein from Escherichia coli (strain K12).